A 491-amino-acid polypeptide reads, in one-letter code: uncharacterized protein (491 aa).

266–273 contacts ATP; that stretch reads GIQGTGKS.

Belongs to the AAA ATPase family. Highly divergent.

It localises to the plastid. The protein localises to the chloroplast. This is an uncharacterized protein from Porphyra purpurea (Red seaweed).